The chain runs to 272 residues: tRNA pseudouridine synthase A (272 aa).

The Nucleophile role is filled by Asp-52. Tyr-110 contributes to the substrate binding site.

The protein belongs to the tRNA pseudouridine synthase TruA family. Homodimer.

It catalyses the reaction uridine(38/39/40) in tRNA = pseudouridine(38/39/40) in tRNA. Formation of pseudouridine at positions 38, 39 and 40 in the anticodon stem and loop of transfer RNAs. The sequence is that of tRNA pseudouridine synthase A from Cupriavidus taiwanensis (strain DSM 17343 / BCRC 17206 / CCUG 44338 / CIP 107171 / LMG 19424 / R1) (Ralstonia taiwanensis (strain LMG 19424)).